Consider the following 311-residue polypeptide: 4-hydroxy-tetrahydrodipicolinate synthase (311 aa).

Pyruvate is bound at residue Thr51. Tyr140 functions as the Proton donor/acceptor in the catalytic mechanism. Lys168 functions as the Schiff-base intermediate with substrate in the catalytic mechanism. A pyruvate-binding site is contributed by Ile209.

Belongs to the DapA family. In terms of assembly, homotetramer; dimer of dimers.

It localises to the cytoplasm. It carries out the reaction L-aspartate 4-semialdehyde + pyruvate = (2S,4S)-4-hydroxy-2,3,4,5-tetrahydrodipicolinate + H2O + H(+). It participates in amino-acid biosynthesis; L-lysine biosynthesis via DAP pathway; (S)-tetrahydrodipicolinate from L-aspartate: step 3/4. Functionally, catalyzes the condensation of (S)-aspartate-beta-semialdehyde [(S)-ASA] and pyruvate to 4-hydroxy-tetrahydrodipicolinate (HTPA). In Streptococcus pneumoniae (strain Taiwan19F-14), this protein is 4-hydroxy-tetrahydrodipicolinate synthase.